Here is a 428-residue protein sequence, read N- to C-terminus: MLDPKFLRNELEVTAERLATRGFILDVERLGKLEDKRKSLQVATEELQASRNAISKSIGQAKAKGEDVAPIMAQVGSLGEELDAKKAELASLLDELNSIAMSVPNLPDESAPIGADESENVEVRRWGTPKEYDFEVKDHVELGENIGGLDFKNAVKITGSRFIVMKGQIARMHRALAQFMLDLHTTEHGYTEAYVPLLVNEDSLMGTGQLPKFGEDLFHTKPATEEGQGLSLIPTAEVPLTNLVRDTIVDEEELPIKLTAHTPCFRSEAGSYGRDTRGLIRQHQFDKVELVQLVKPENSMQALEELTAHAETVLQKLGLPYRTVVLCTGDMGFGSSKTYDIEVWLPAQNTFREISSCSNMQDFQARRMQARYKAKTDKKPSLLHTLNGSGLAVGRTLVAVIENYQNADGSITVPEALRGYMGGLEKIG.

Residue 235-237 (TAE) coordinates L-serine. 266 to 268 (RSE) provides a ligand contact to ATP. L-serine is bound at residue glutamate 289. Residue 353-356 (EISS) participates in ATP binding. Serine 389 serves as a coordination point for L-serine.

The protein belongs to the class-II aminoacyl-tRNA synthetase family. Type-1 seryl-tRNA synthetase subfamily. As to quaternary structure, homodimer. The tRNA molecule binds across the dimer.

It is found in the cytoplasm. The enzyme catalyses tRNA(Ser) + L-serine + ATP = L-seryl-tRNA(Ser) + AMP + diphosphate + H(+). The catalysed reaction is tRNA(Sec) + L-serine + ATP = L-seryl-tRNA(Sec) + AMP + diphosphate + H(+). The protein operates within aminoacyl-tRNA biosynthesis; selenocysteinyl-tRNA(Sec) biosynthesis; L-seryl-tRNA(Sec) from L-serine and tRNA(Sec): step 1/1. Catalyzes the attachment of serine to tRNA(Ser). Is also able to aminoacylate tRNA(Sec) with serine, to form the misacylated tRNA L-seryl-tRNA(Sec), which will be further converted into selenocysteinyl-tRNA(Sec). This Shewanella halifaxensis (strain HAW-EB4) protein is Serine--tRNA ligase.